Here is a 382-residue protein sequence, read N- to C-terminus: Methylthioribose-1-phosphate isomerase (382 aa).

Asp-257 (proton donor) is an active-site residue.

Belongs to the eIF-2B alpha/beta/delta subunits family. MtnA subfamily.

The protein resides in the cytoplasm. The protein localises to the nucleus. The catalysed reaction is 5-(methylsulfanyl)-alpha-D-ribose 1-phosphate = 5-(methylsulfanyl)-D-ribulose 1-phosphate. The protein operates within amino-acid biosynthesis; L-methionine biosynthesis via salvage pathway; L-methionine from S-methyl-5-thio-alpha-D-ribose 1-phosphate: step 1/6. In terms of biological role, catalyzes the interconversion of methylthioribose-1-phosphate (MTR-1-P) into methylthioribulose-1-phosphate (MTRu-1-P). In Paracoccidioides brasiliensis (strain Pb18), this protein is Methylthioribose-1-phosphate isomerase.